The chain runs to 99 residues: Large ribosomal subunit protein bL27 (99 aa).

Positions 1-10 (MKLIFDIQLF) are excised as a propeptide.

This sequence belongs to the bacterial ribosomal protein bL27 family. The N-terminus is cleaved by ribosomal processing cysteine protease Prp.

This is Large ribosomal subunit protein bL27 from Caldicellulosiruptor saccharolyticus (strain ATCC 43494 / DSM 8903 / Tp8T 6331).